A 158-amino-acid polypeptide reads, in one-letter code: 2-C-methyl-D-erythritol 2,4-cyclodiphosphate synthase (158 aa).

D9 and H11 together coordinate a divalent metal cation. 4-CDP-2-C-methyl-D-erythritol 2-phosphate-binding positions include 9-11 (DAH) and 35-36 (HS). A divalent metal cation is bound at residue H43. 4-CDP-2-C-methyl-D-erythritol 2-phosphate contacts are provided by residues 57–59 (DIG), 62–66 (FPDTD), 133–136 (TTTE), F140, and R143.

Belongs to the IspF family. As to quaternary structure, homotrimer. A divalent metal cation serves as cofactor.

It catalyses the reaction 4-CDP-2-C-methyl-D-erythritol 2-phosphate = 2-C-methyl-D-erythritol 2,4-cyclic diphosphate + CMP. Its pathway is isoprenoid biosynthesis; isopentenyl diphosphate biosynthesis via DXP pathway; isopentenyl diphosphate from 1-deoxy-D-xylulose 5-phosphate: step 4/6. In terms of biological role, involved in the biosynthesis of isopentenyl diphosphate (IPP) and dimethylallyl diphosphate (DMAPP), two major building blocks of isoprenoid compounds. Catalyzes the conversion of 4-diphosphocytidyl-2-C-methyl-D-erythritol 2-phosphate (CDP-ME2P) to 2-C-methyl-D-erythritol 2,4-cyclodiphosphate (ME-CPP) with a corresponding release of cytidine 5-monophosphate (CMP). The chain is 2-C-methyl-D-erythritol 2,4-cyclodiphosphate synthase from Methylococcus capsulatus (strain ATCC 33009 / NCIMB 11132 / Bath).